Here is a 572-residue protein sequence, read N- to C-terminus: Neuronal acetylcholine receptor subunit alpha-9-I (572 aa).

A signal peptide spans 1 to 19 (MKTVVLLTWISCWIDVCTS). Topologically, residues 20 to 232 (AQGRYAQKLL…YTLHLKRRSL (213 aa)) are extracellular. Residue asparagine 51 is glycosylated (N-linked (GlcNAc...) asparagine). Cysteine 149 and cysteine 163 are joined by a disulfide. Asparagine 164 is a glycosylation site (N-linked (GlcNAc...) asparagine). Cysteine 213 and cysteine 214 are joined by a disulfide. 3 consecutive transmembrane segments (helical) span residues 233-253 (FYIF…PLGF), 263-283 (VSLG…VAES), and 297-317 (YIAT…IMNI). At 318-550 (HFCGAEAKPV…WKKVAKVMDR (233 aa)) the chain is on the cytoplasmic side. The segment at 405-458 (GHLQNHHSTHQNHLDNCRYANGGHRDDHYSNRSNQNHHSNRSQTSKGEGGEEKR) is disordered. Over residues 435 to 447 (NRSNQNHHSNRSQ) the composition is skewed to low complexity. The helical transmembrane segment at 551 to 571 (FFMWIFFIMVFLMSILIIGKA) threads the bilayer.

The protein belongs to the ligand-gated ion channel (TC 1.A.9) family. Acetylcholine receptor (TC 1.A.9.1) subfamily. In terms of tissue distribution, expressed in the liver, olfactory mucosa, pituitary gland, hair cells of the saccule and spleen.

The protein resides in the postsynaptic cell membrane. Its subcellular location is the cell membrane. The polypeptide is Neuronal acetylcholine receptor subunit alpha-9-I (nachra9) (Oncorhynchus mykiss (Rainbow trout)).